Consider the following 298-residue polypeptide: Multifunctional dioxygenase ausE (298 aa).

Residues Arg72 and Gln127 each contribute to the substrate site. 2 residues coordinate Fe cation: His130 and Asp132. Thr167 lines the substrate pocket. Residue His214 participates in Fe cation binding. Residue Arg226 coordinates substrate.

This sequence belongs to the PhyH family. Homodimer. Requires Fe cation as cofactor.

It carries out the reaction preaustinoid A1 + 2-oxoglutarate + O2 = preaustinoid A2 + succinate + CO2 + H2O. It catalyses the reaction preaustinoid A2 + 2-oxoglutarate + O2 = preaustinoid A3 + succinate + CO2 + H2O. The enzyme catalyses berkeleyone A + 2-oxoglutarate + O2 = preaustinoid A + succinate + CO2 + H2O. Its pathway is secondary metabolite biosynthesis; terpenoid biosynthesis. Multifunctional dioxygenase; part of the gene cluster that mediates the biosynthesis of calidodehydroaustin, a fungal meroterpenoid. The first step of the pathway is the synthesis of 3,5-dimethylorsellinic acid by the polyketide synthase ausA. 3,5-dimethylorsellinic acid is then prenylated by the polyprenyl transferase ausN. Further epoxidation by the FAD-dependent monooxygenase ausM and cyclization by the probable terpene cyclase ausL lead to the formation of protoaustinoid A. Protoaustinoid A is then oxidized to spiro-lactone preaustinoid A3 by the combined action of the FAD-binding monooxygenases ausB and ausC, and the dioxygenase ausE. Acid-catalyzed keto-rearrangement and ring contraction of the tetraketide portion of preaustinoid A3 by ausJ lead to the formation of preaustinoid A4. The aldo-keto reductase ausK, with the help of ausH, is involved in the next step by transforming preaustinoid A4 into isoaustinone which is in turn hydroxylated by the P450 monooxygenase ausI to form austinolide. The cytochrome P450 monooxygenase ausG modifies austinolide to austinol. Austinol is further acetylated to austin by the O-acetyltransferase ausP, which spontaneously changes to dehydroaustin. The cytochrome P450 monooxygenase ausR then converts dehydroaustin is into 7-dehydrodehydroaustin. The hydroxylation catalyzed by ausR permits the O-acetyltransferase ausQ to add an additional acetyl group to the molecule, leading to the formation of acetoxydehydroaustin. The short chain dehydrogenase ausT catalyzes the reduction of the double bond present between carbon atoms 1 and 2 to convert 7-dehydrodehydroaustin into 1,2-dihydro-7-hydroxydehydroaustin. AusQ catalyzes not only an acetylation reaction but also the addition of the PKS ausV diketide product to 1,2-dihydro-7-hydroxydehydroaustin, forming precalidodehydroaustin. Finally, the iron/alpha-ketoglutarate-dependent dioxygenase converts precalidodehydroaustin into calidodehydroaustin. The sequence is that of Multifunctional dioxygenase ausE from Aspergillus calidoustus.